Reading from the N-terminus, the 344-residue chain is Zinc transporter 9 (344 aa).

A helical transmembrane segment spans residues 1–21; sequence MASILISGAAGVSIPLVGTLL. Residues 22-30 are Cytoplasmic-facing; that stretch reads PLNGGLMRG. Residues 31–51 form a helical membrane-spanning segment; that stretch reads AKAFAAGVILATGFVHMLSGG. Topologically, residues 52–72 are extracellular; that stretch reads SKALSDPCLPEFPWKMFPFPE. The helical transmembrane segment at 73 to 93 threads the bilayer; the sequence is FFAMVAALLTLLADFMITGYY. Residues 94–188 lie on the Cytoplasmic side of the membrane; it reads ERKQEKMMNQ…DVGLDSGVRH (95 aa). A helical membrane pass occupies residues 189–209; it reads VVVSQILEMGIVSHSIIIGIS. Residues 210-221 lie on the Extracellular side of the membrane; it reads LGVSHSPCTIRP. A helical membrane pass occupies residues 222–242; it reads LLLALSFHQFFEGFALGGCVA. The Cytoplasmic segment spans residues 243–251; sequence EARLTPRGS. Residues 252–272 form a helical membrane-spanning segment; it reads AMMAFFFAITTPIGVAVGTAI. Over 273 to 291 the chain is Extracellular; it reads ASSYNSYSVAALVAEGVLD. Residues 292-312 form a helical membrane-spanning segment; the sequence is SLSAGILVYMALVDLIAADFL. The Cytoplasmic segment spans residues 313–323; it reads SKKMSVDFRVQ. A helical membrane pass occupies residues 324 to 344; the sequence is VVSYCFLFLGAGMMSALAIWA.

Belongs to the ZIP transporter (TC 2.A.5) family.

The protein resides in the cell membrane. Its function is as follows. Zinc transporter involved in zinc uptake in roots. Targeted by BZIP19 transcription factor in response to zinc-deficient conditions. This chain is Zinc transporter 9 (ZIP9), found in Arabidopsis thaliana (Mouse-ear cress).